We begin with the raw amino-acid sequence, 293 residues long: Non-homologous end joining protein Ku (293 aa).

In terms of domain architecture, Ku spans 10 to 195 (ISFGLVHIPV…KLDKRELEMA (186 aa)). The required for dimerization stretch occupies residues 216 to 229 (SDKIMKLVEEKAAK). The segment at 260–293 (RSRAGGGKDKGSEKAGADAKGRAKSGASRSRRKA) is disordered. The segment covering 265-280 (GGKDKGSEKAGADAKG) has biased composition (basic and acidic residues).

This sequence belongs to the prokaryotic Ku family. Homodimer, may form higher-order multimers on DNA. Non-dimerized protein does not stimulate LigD ligase activity. Probably interacts with LigD.

In terms of biological role, with LigD forms a non-homologous end joining (NHEJ) DNA repair enzyme, which repairs dsDNA breaks with reduced fidelity. Stimulates rNTP addition to DSB and end joining (ligation) of linear DNA by LigD, on 3'-overhangs and probably also 5'-overhangs and blunt dsDNA breaks. Binds both ends of linear dsDNA protecting it from exonuclease activity. The protein is Non-homologous end joining protein Ku of Pseudomonas aeruginosa (strain ATCC 15692 / DSM 22644 / CIP 104116 / JCM 14847 / LMG 12228 / 1C / PRS 101 / PAO1).